The primary structure comprises 290 residues: tRNA-cytidine(32) 2-sulfurtransferase (290 aa).

A PP-loop motif motif is present at residues 66 to 71 (SGGKDS). Residues cysteine 141, cysteine 144, and cysteine 232 each coordinate [4Fe-4S] cluster.

Belongs to the TtcA family. In terms of assembly, homodimer. The cofactor is Mg(2+). It depends on [4Fe-4S] cluster as a cofactor.

The protein resides in the cytoplasm. It carries out the reaction cytidine(32) in tRNA + S-sulfanyl-L-cysteinyl-[cysteine desulfurase] + AH2 + ATP = 2-thiocytidine(32) in tRNA + L-cysteinyl-[cysteine desulfurase] + A + AMP + diphosphate + H(+). It functions in the pathway tRNA modification. Catalyzes the ATP-dependent 2-thiolation of cytidine in position 32 of tRNA, to form 2-thiocytidine (s(2)C32). The sulfur atoms are provided by the cysteine/cysteine desulfurase (IscS) system. This Rhizobium etli (strain ATCC 51251 / DSM 11541 / JCM 21823 / NBRC 15573 / CFN 42) protein is tRNA-cytidine(32) 2-sulfurtransferase.